Reading from the N-terminus, the 279-residue chain is Probable endonuclease 4 (279 aa).

Residues His-69, His-109, Glu-145, Asp-179, His-182, His-216, Asp-229, His-231, and Glu-261 each contribute to the Zn(2+) site.

Belongs to the AP endonuclease 2 family. It depends on Zn(2+) as a cofactor.

It catalyses the reaction Endonucleolytic cleavage to 5'-phosphooligonucleotide end-products.. Functionally, endonuclease IV plays a role in DNA repair. It cleaves phosphodiester bonds at apurinic or apyrimidinic (AP) sites, generating a 3'-hydroxyl group and a 5'-terminal sugar phosphate. The sequence is that of Probable endonuclease 4 from Chlorobium luteolum (strain DSM 273 / BCRC 81028 / 2530) (Pelodictyon luteolum).